Reading from the N-terminus, the 404-residue chain is Cysteine desulfurase IscS (404 aa).

Pyridoxal 5'-phosphate is bound by residues 75–76 (AT), Asn155, Gln183, and 203–205 (SAH). Lys206 is modified (N6-(pyridoxal phosphate)lysine). Thr243 lines the pyridoxal 5'-phosphate pocket. Cys328 serves as the catalytic Cysteine persulfide intermediate. Cys328 contributes to the [2Fe-2S] cluster binding site.

The protein belongs to the class-V pyridoxal-phosphate-dependent aminotransferase family. NifS/IscS subfamily. In terms of assembly, homodimer. Forms a heterotetramer with IscU, interacts with other sulfur acceptors. Requires pyridoxal 5'-phosphate as cofactor.

The protein localises to the cytoplasm. The catalysed reaction is (sulfur carrier)-H + L-cysteine = (sulfur carrier)-SH + L-alanine. It participates in cofactor biosynthesis; iron-sulfur cluster biosynthesis. In terms of biological role, master enzyme that delivers sulfur to a number of partners involved in Fe-S cluster assembly, tRNA modification or cofactor biosynthesis. Catalyzes the removal of elemental sulfur atoms from cysteine to produce alanine. Functions as a sulfur delivery protein for Fe-S cluster synthesis onto IscU, an Fe-S scaffold assembly protein, as well as other S acceptor proteins. The protein is Cysteine desulfurase IscS of Photorhabdus laumondii subsp. laumondii (strain DSM 15139 / CIP 105565 / TT01) (Photorhabdus luminescens subsp. laumondii).